Reading from the N-terminus, the 72-residue chain is Translation initiation factor IF-1 (72 aa).

The region spanning 1–72 (MSKDDVIEMQ…TRGRITWRAK (72 aa)) is the S1-like domain.

This sequence belongs to the IF-1 family. As to quaternary structure, component of the 30S ribosomal translation pre-initiation complex which assembles on the 30S ribosome in the order IF-2 and IF-3, IF-1 and N-formylmethionyl-tRNA(fMet); mRNA recruitment can occur at any time during PIC assembly.

The protein localises to the cytoplasm. Its function is as follows. One of the essential components for the initiation of protein synthesis. Stabilizes the binding of IF-2 and IF-3 on the 30S subunit to which N-formylmethionyl-tRNA(fMet) subsequently binds. Helps modulate mRNA selection, yielding the 30S pre-initiation complex (PIC). Upon addition of the 50S ribosomal subunit IF-1, IF-2 and IF-3 are released leaving the mature 70S translation initiation complex. The polypeptide is Translation initiation factor IF-1 (Clostridium kluyveri (strain ATCC 8527 / DSM 555 / NBRC 12016 / NCIMB 10680 / K1)).